The primary structure comprises 412 residues: MSATTSEENPDSINYIGFNQDSKVICVGHKDGYMFYKTADILENNTLTYEGENLTHLGLNNCLIIERLFSSALMVVISQKDPRVLHVYHFTSRNIICDHRFNKSVLTVRLNRDRIVVCLEDCIYIYNLKDMKMMHNIMDTPTNKLGVLDLTSNPGNALIAYPGSTDTGSVHLFDAINLSSVSTFNAHEGTIACLKFNQEGNMIATASTKGTVIRVYSVPNGHRLFEFRRGVTRCVNIYSLCFSSDSKYLTSSSNTETVHVFKLEKTEGVDNKPEASTEGGGWFDAINKTFSAYMPSQVLQVGELMTTERSFATAKLPGAARSNQVSLVSHKNQQYVMAATSDGFVYAYRLDPEGGELDLIKQHNIGPKSDTSRASPTSTGSGGAAKSAEASNQSVPNMDDPDDFPPMSHTSG.

3 WD repeats span residues 100–139, 142–183, and 186–226; these read RFNKSVLTVRLNRDRIVVCLEDCIYIYNLKDMKMMHNIMD, TNKL…SVST, and AHEG…RLFE. Positions 227 to 230 match the L/FRRG motif motif; sequence FRRG. The WD 4 repeat unit spans residues 232–271; the sequence is TRCVNIYSLCFSSDSKYLTSSSNTETVHVFKLEKTEGVDN. The tract at residues 363 to 412 is disordered; sequence HNIGPKSDTSRASPTSTGSGGAAKSAEASNQSVPNMDDPDDFPPMSHTSG. Positions 372–391 are enriched in low complexity; it reads SRASPTSTGSGGAAKSAEAS.

Belongs to the WD repeat PROPPIN family. As to expression, expressed in neurons and intestinal cells.

The protein resides in the cytoplasmic vesicle. It localises to the phagosome membrane. The protein localises to the cytoplasm. Component of the autophagy machinery that is recruited to phosphatidylinositols on preautophagosomal structures, which are early autophagic structures, to promote autophagosome formation, and the subsequent degradation and clearance of engulfed apoptotic cells and P-granules in somatic cells. In particular, binds with high affinity to phosphatidylinositols including phosphatidylinositol 3-phosphate (PtdIns(3)P), phosphatidylinositol 4-phosphate (PtdIns(4)P), and phosphatidylinositol 5-phosphate (PtdIns(5)P), and more weakly to phosphatidylinositol 3,5-bisphosphate (PtdIns(3,5)P2). Plays a role in mitophagy, which is the autophagic consumption of mitochondria, in response to dietary restriction. Involved in xenophagy, the autophagy-mediated degradation of pathogens and pathogen products, such as toxins. Also plays a role in membrane-pore repair. In a daf-18/PTEN- and daf-16/FOXO-dependent manner, required for the proliferation of germ stem cell progenitors in the gonad during the late phases of larval development. By regulating the release of neurotransmitters and neuropeptides, involved in the control of lifespan in response to dietary restriction and daf-2 signaling. Probably through its involvement in autophagy, required for dauer formation. The chain is Autophagy-related protein 18 from Caenorhabditis elegans.